The chain runs to 267 residues: DNA repair protein RecO (267 aa).

This sequence belongs to the RecO family.

In terms of biological role, involved in DNA repair and RecF pathway recombination. This Mesoplasma florum (strain ATCC 33453 / NBRC 100688 / NCTC 11704 / L1) (Acholeplasma florum) protein is DNA repair protein RecO.